Consider the following 151-residue polypeptide: UPF0178 protein VSAL_I0701 (151 aa).

This sequence belongs to the UPF0178 family.

This chain is UPF0178 protein VSAL_I0701, found in Aliivibrio salmonicida (strain LFI1238) (Vibrio salmonicida (strain LFI1238)).